A 160-amino-acid chain; its full sequence is Major strawberry allergen Fra a 1.08 (160 aa).

Belongs to the BetVI family. Post-translationally, phosphorylated in vivo. Phosphorylation prevents its activity as ribonuclease. As to expression, highly expressed in roots. Expressed a low levels in ripe red fruits.

Possesses ribonuclease activity in vitro. This Fragaria ananassa (Strawberry) protein is Major strawberry allergen Fra a 1.08.